Consider the following 403-residue polypeptide: N-isopropylammelide isopropyl amidohydrolase (403 aa).

Residues histidine 60, histidine 62, and histidine 217 each contribute to the Zn(2+) site. Residue histidine 249 is the Proton donor/acceptor of the active site. Zn(2+) is bound at residue aspartate 303.

This sequence belongs to the metallo-dependent hydrolases superfamily. N-acyl-D-amino-acid deacylase family. Homotetramer. It depends on Zn(2+) as a cofactor.

It localises to the cytoplasm. The enzyme catalyses N-isopropylammelide + H2O + H(+) = isopropylamine + cyanurate. It functions in the pathway xenobiotic degradation; atrazine degradation; cyanurate from atrazine: step 3/3. With respect to regulation, inhibited by N-ethylammeline, N-hydroxyethylammeline, N-isopropylammeline, ammeline and 2-amino-4hydroxy-1,3,5-s-triazine. Its function is as follows. Transforms N-isopropylammelide to cyanuric acid and isopropylamine. The polypeptide is N-isopropylammelide isopropyl amidohydrolase (atzC) (Pseudomonas sp. (strain ADP)).